The following is a 1376-amino-acid chain: DNA-directed RNA polymerase subunit beta'' (1376 aa).

4 residues coordinate Zn(2+): Cys221, Cys290, Cys297, and Cys300. Residues 895–919 are disordered; it reads PSGSGFPSDNELDHSNRNPFSSSYP.

The protein belongs to the RNA polymerase beta' chain family. RpoC2 subfamily. In terms of assembly, in plastids the minimal PEP RNA polymerase catalytic core is composed of four subunits: alpha, beta, beta', and beta''. When a (nuclear-encoded) sigma factor is associated with the core the holoenzyme is formed, which can initiate transcription. The cofactor is Zn(2+).

The protein resides in the plastid. Its subcellular location is the chloroplast. It catalyses the reaction RNA(n) + a ribonucleoside 5'-triphosphate = RNA(n+1) + diphosphate. In terms of biological role, DNA-dependent RNA polymerase catalyzes the transcription of DNA into RNA using the four ribonucleoside triphosphates as substrates. The sequence is that of DNA-directed RNA polymerase subunit beta'' from Pelargonium hortorum (Common geranium).